The sequence spans 196 residues: dITP/XTP pyrophosphatase (196 aa).

7–12 (TGNAGK) contacts substrate. Mg(2+) contacts are provided by Glu39 and Asp68. Residue Asp68 is the Proton acceptor of the active site. Residues Ser69, 153–156 (HGYD), Lys176, and 181–182 (HR) each bind substrate.

It belongs to the HAM1 NTPase family. Homodimer. The cofactor is Mg(2+).

The enzyme catalyses XTP + H2O = XMP + diphosphate + H(+). It carries out the reaction dITP + H2O = dIMP + diphosphate + H(+). It catalyses the reaction ITP + H2O = IMP + diphosphate + H(+). Its function is as follows. Pyrophosphatase that catalyzes the hydrolysis of nucleoside triphosphates to their monophosphate derivatives, with a high preference for the non-canonical purine nucleotides XTP (xanthosine triphosphate), dITP (deoxyinosine triphosphate) and ITP. Seems to function as a house-cleaning enzyme that removes non-canonical purine nucleotides from the nucleotide pool, thus preventing their incorporation into DNA/RNA and avoiding chromosomal lesions. This chain is dITP/XTP pyrophosphatase, found in Thioalkalivibrio sulfidiphilus (strain HL-EbGR7).